The sequence spans 144 residues: MPKVRRSRKPPPEGWELIEPTLDELDQKMREAETEPHEGKRKVEALWPIFKIHHQKSRYIFDLFYRRKAISRELYEYCLKEGIADKNLIAKWKKQGYENLCCLRCIQTRDTNFGTNCICRVPKSKLEEGRIVECVHCGCRGCSG.

A Nuclear localization signal motif is present at residues 2-10 (PKVRRSRKP).

Belongs to the BUD31 (G10) family.

Its subcellular location is the nucleus. This is Protein BUD31 homolog from Branchiostoma belcheri (Amphioxus).